The sequence spans 890 residues: DNA mismatch repair protein MutS (890 aa).

ATP is bound at residue 607-614 (GPNMSGKS).

Belongs to the DNA mismatch repair MutS family.

Functionally, this protein is involved in the repair of mismatches in DNA. It is possible that it carries out the mismatch recognition step. This protein has a weak ATPase activity. In Bacillus thuringiensis (strain Al Hakam), this protein is DNA mismatch repair protein MutS.